A 372-amino-acid chain; its full sequence is Protein phosphatase 1 regulatory subunit 42 (372 aa).

LRR repeat units lie at residues 30–51, 52–71, 72–93, 94–115, 116–137, 146–167, and 168–189; these read RITH…TMCR, NLTV…NLGS, NLTH…SGLK, RLEK…EGLR, ELRE…LFDP, SLSV…AVLE, and NLTQ…EFVL. The region spanning 203–241 is the LRRCT domain; the sequence is NPVCLKPKYREKVTIISKTLEILDGKEIKEMARQFLLNW.

Its subcellular location is the cytoplasm. It localises to the cytoskeleton. It is found in the microtubule organizing center. The protein resides in the centrosome. Functionally, may regulate phosphatase activity of protein phosphatase 1 (PP1) complexes. The polypeptide is Protein phosphatase 1 regulatory subunit 42 (ppp1r42) (Xenopus laevis (African clawed frog)).